A 352-amino-acid polypeptide reads, in one-letter code: Decapping nuclease din1 (352 aa).

Substrate is bound by residues arginine 33 and 93–95 (WRG). Position 150 (glutamate 150) interacts with a divalent metal cation. Substrate-binding residues include cysteine 182 and glutamate 199. Aspartate 201 is a binding site for a divalent metal cation. Serine 218 is subject to Phosphoserine. Glutamate 239 and leucine 240 together coordinate a divalent metal cation. Substrate contacts are provided by lysine 241 and glutamine 263.

This sequence belongs to the DXO/Dom3Z family. In terms of assembly, interacts with dhp1/Rat1; the interaction is direct, stabilizes dhp1 protein structure and stimulates its exoribonuclease activity. The interaction also stimulates din1 pyrophosphohydrolase activity, probably by recruiting it to mRNA substrates. The cofactor is a divalent metal cation.

The protein localises to the nucleus. The catalysed reaction is a 5'-end NAD(+)-phospho-ribonucleoside in mRNA + H2O = a 5'-end phospho-ribonucleoside in mRNA + NAD(+) + H(+). It catalyses the reaction a 5'-end (N(7)-methyl 5'-triphosphoguanosine)-ribonucleoside-ribonucleotide in mRNA + H2O = a (N(7)-methyl 5'-triphosphoguanosine)-nucleoside + a 5'-end phospho-ribonucleoside in mRNA + H(+). The enzyme catalyses a 5'-end triphospho-ribonucleoside in mRNA + H2O = a 5'-end phospho-ribonucleoside in mRNA + diphosphate + H(+). Functionally, decapping enzyme for NAD-capped RNAs: specifically hydrolyzes the nicotinamide adenine dinucleotide (NAD) cap from a subset of RNAs by removing the entire NAD moiety from the 5'-end of an NAD-capped RNA. The NAD-cap is present at the 5'-end of some RNAs and snoRNAs. In contrast to the canonical 5'-end N7 methylguanosine (m7G) cap, the NAD cap promotes mRNA decay. Also acts as a non-canonical decapping enzyme that removes the entire cap structure of m7G capped or incompletely capped RNAs and mediates their subsequent degradation. Specifically degrades pre-mRNAs with a defective m7G cap and is part of a pre-mRNA capping quality control. Has decapping activity toward incomplete 5'-end m7G cap mRNAs such as unmethylated 5'-end-capped RNA (cap0), while it has no activity toward 2'-O-ribose methylated m7G cap (cap1). Also possesses RNA 5'-pyrophosphohydrolase activity by hydrolyzing the 5'-end triphosphate to release pyrophosphates. Stimulates exoribonuclease activity of dhp1, allowing it to degrade RNAs with stable secondary structure more effectively. This Schizosaccharomyces pombe (strain 972 / ATCC 24843) (Fission yeast) protein is Decapping nuclease din1.